A 113-amino-acid polypeptide reads, in one-letter code: Hydrogenase maturation factor HypA (113 aa).

His2 serves as a coordination point for Ni(2+). Residues Cys73, Cys76, Cys89, and Cys92 each contribute to the Zn(2+) site.

It belongs to the HypA/HybF family.

Involved in the maturation of [NiFe] hydrogenases. Required for nickel insertion into the metal center of the hydrogenase. This is Hydrogenase maturation factor HypA from Cereibacter sphaeroides (strain ATCC 17023 / DSM 158 / JCM 6121 / CCUG 31486 / LMG 2827 / NBRC 12203 / NCIMB 8253 / ATH 2.4.1.) (Rhodobacter sphaeroides).